A 283-amino-acid chain; its full sequence is Phosphatidylserine decarboxylase proenzyme (283 aa).

Residues Asp-89, His-146, and Ser-249 each act as charge relay system; for autoendoproteolytic cleavage activity in the active site. The active-site Schiff-base intermediate with substrate; via pyruvic acid; for decarboxylase activity is Ser-249. Residue Ser-249 is modified to Pyruvic acid (Ser); by autocatalysis.

Belongs to the phosphatidylserine decarboxylase family. PSD-B subfamily. Prokaryotic type I sub-subfamily. In terms of assembly, heterodimer of a large membrane-associated beta subunit and a small pyruvoyl-containing alpha subunit. Pyruvate is required as a cofactor. Post-translationally, is synthesized initially as an inactive proenzyme. Formation of the active enzyme involves a self-maturation process in which the active site pyruvoyl group is generated from an internal serine residue via an autocatalytic post-translational modification. Two non-identical subunits are generated from the proenzyme in this reaction, and the pyruvate is formed at the N-terminus of the alpha chain, which is derived from the carboxyl end of the proenzyme. The autoendoproteolytic cleavage occurs by a canonical serine protease mechanism, in which the side chain hydroxyl group of the serine supplies its oxygen atom to form the C-terminus of the beta chain, while the remainder of the serine residue undergoes an oxidative deamination to produce ammonia and the pyruvoyl prosthetic group on the alpha chain. During this reaction, the Ser that is part of the protease active site of the proenzyme becomes the pyruvoyl prosthetic group, which constitutes an essential element of the active site of the mature decarboxylase.

The protein resides in the cell membrane. It catalyses the reaction a 1,2-diacyl-sn-glycero-3-phospho-L-serine + H(+) = a 1,2-diacyl-sn-glycero-3-phosphoethanolamine + CO2. Its pathway is phospholipid metabolism; phosphatidylethanolamine biosynthesis; phosphatidylethanolamine from CDP-diacylglycerol: step 2/2. Functionally, catalyzes the formation of phosphatidylethanolamine (PtdEtn) from phosphatidylserine (PtdSer). The protein is Phosphatidylserine decarboxylase proenzyme of Legionella pneumophila (strain Lens).